The chain runs to 351 residues: Tryptophan--tRNA ligase (351 aa).

ATP contacts are provided by residues 11–13 (RPT) and 19–20 (GH). Residues 12–20 (PTGALHLGH) carry the 'HIGH' region motif. Position 139 (Asp139) interacts with L-tryptophan. ATP-binding positions include 151–153 (GRD), Leu190, and 198–202 (KMSKS). A 'KMSKS' region motif is present at residues 198–202 (KMSKS).

Belongs to the class-I aminoacyl-tRNA synthetase family. Homodimer.

The protein resides in the cytoplasm. It carries out the reaction tRNA(Trp) + L-tryptophan + ATP = L-tryptophyl-tRNA(Trp) + AMP + diphosphate + H(+). Functionally, catalyzes the attachment of tryptophan to tRNA(Trp). This is Tryptophan--tRNA ligase from Borreliella burgdorferi (strain ATCC 35210 / DSM 4680 / CIP 102532 / B31) (Borrelia burgdorferi).